A 71-amino-acid chain; its full sequence is MKDNIHPTVYKATMNCACGYQAEVLSTKGENVHVEICSNCHPFYTGKQRLIDTAGRIDRFRKKYAKFGEEK.

Zn(2+) contacts are provided by cysteine 16, cysteine 18, cysteine 37, and cysteine 40.

Belongs to the bacterial ribosomal protein bL31 family. Type A subfamily. In terms of assembly, part of the 50S ribosomal subunit. It depends on Zn(2+) as a cofactor.

Binds the 23S rRNA. The protein is Large ribosomal subunit protein bL31 of Nitratidesulfovibrio vulgaris (strain ATCC 29579 / DSM 644 / CCUG 34227 / NCIMB 8303 / VKM B-1760 / Hildenborough) (Desulfovibrio vulgaris).